Reading from the N-terminus, the 139-residue chain is Putative pre-16S rRNA nuclease (139 aa).

This sequence belongs to the YqgF nuclease family.

It localises to the cytoplasm. Functionally, could be a nuclease involved in processing of the 5'-end of pre-16S rRNA. This Streptococcus pyogenes serotype M1 protein is Putative pre-16S rRNA nuclease.